The following is a 229-amino-acid chain: Large ribosomal subunit protein bL25 (229 aa).

Disordered stretches follow at residues 1-21 and 187-229; these read MSDA…GASR and PSAL…KGDD. Residues 196 to 207 show a composition bias toward acidic residues; it reads SEEEEDGEEVDA.

The protein belongs to the bacterial ribosomal protein bL25 family. CTC subfamily. In terms of assembly, part of the 50S ribosomal subunit; part of the 5S rRNA/L5/L18/L25 subcomplex. Contacts the 5S rRNA. Binds to the 5S rRNA independently of L5 and L18.

Its function is as follows. This is one of the proteins that binds to the 5S RNA in the ribosome where it forms part of the central protuberance. The protein is Large ribosomal subunit protein bL25 of Erythrobacter litoralis (strain HTCC2594).